We begin with the raw amino-acid sequence, 226 residues long: Triosephosphate isomerase (226 aa).

N12–K14 lines the substrate pocket. H96 serves as the catalytic Electrophile. E144 functions as the Proton acceptor in the catalytic mechanism. Substrate contacts are provided by residues I149, G184, and A205 to S206.

Belongs to the triosephosphate isomerase family. Homotetramer; dimer of dimers.

The protein resides in the cytoplasm. The enzyme catalyses D-glyceraldehyde 3-phosphate = dihydroxyacetone phosphate. The protein operates within carbohydrate biosynthesis; gluconeogenesis. It functions in the pathway carbohydrate degradation; glycolysis; D-glyceraldehyde 3-phosphate from glycerone phosphate: step 1/1. Its function is as follows. Involved in the gluconeogenesis. Catalyzes stereospecifically the conversion of dihydroxyacetone phosphate (DHAP) to D-glyceraldehyde-3-phosphate (G3P). This chain is Triosephosphate isomerase, found in Thermococcus kodakarensis (strain ATCC BAA-918 / JCM 12380 / KOD1) (Pyrococcus kodakaraensis (strain KOD1)).